Consider the following 610-residue polypeptide: MNYYVCLHQEGVNSIPKLIEKAFANNYNVVSTSINANMLPFEPHESDPTYPATILSGSDWNSKVIFTMSDVNVDSPNDKLREHAKEVFMRDVAWAEHLQNVGNLMVRLRGPENENLASIVLAKTKDDFPSGNWFIQVPITNPELATFEHRKDATAEEVAEAESNDPWNWWNNLRMVTKHSTKVKVVIELNDADRPSKETVRRWLGEPIEAIIIPSSLFVRNRSNYCVLKKEWQLIVGHFISVRANIIISTNPNDKALCQYADYVNKLINDNCDKHMLNSYENMLEIPLQPLCDNLDTYTYEVFETDPVKYKLYQDAVQAALLDRVSAAEAKTKLTVVMLLGGGRGPLARAVFNAAELTKRKVRLYIIEKNPNAIRTLSNMVKTLWADKDVHIFSKDMRDFSPPELADIMVSELLGSFGDNELSPECLDGALKLLKPDGISIPYKSTSYINPLMSAVLHQNVCQLLPTYPAFDYGYVSLLKNIYHIDEPQALFEFVHPNRAENIDNTRCKTVSFKVNKDCVLHGIGGYFDTHLYKDICLSINPLTHTPGMFSWFPMFFATRPRTLREGQTISIQFWRCVDATKVWYEWQVVNSPDDWEHHNTRGTGYNMRL.

In terms of domain architecture, SAM-dependent MTase PRMT-type spans 284–587 (LEIPLQPLCD…VDATKVWYEW (304 aa)). Residue Y300 coordinates S-adenosyl-L-methionine. F303 contacts a protein. S-adenosyl-L-methionine contacts are provided by residues 309-310 (KY), E368, and 396-397 (DM). 2 residues coordinate a protein: E412 and E421. Active-site proton donor/acceptor residues include E412 and E421. Residues 470 to 610 (AFDYGYVSLL…TRGTGYNMRL (141 aa)) form an interaction with vls region.

It belongs to the class I-like SAM-binding methyltransferase superfamily. Protein arginine N-methyltransferase family. As to quaternary structure, interacts with vls. In terms of tissue distribution, expressed only in ovaries.

The protein localises to the cytoplasm. Functionally, arginine methyltransferase that can both catalyze the formation of omega-N monomethylarginine (MMA) and symmetrical dimethylarginine (sDMA). Specifically mediates the symmetrical dimethylation of arginine residues in the small nuclear ribonucleoproteins SmD1 and SmD3. Required for arginine symmetrical dimethylation of piwi family proteins, piwi, aub and AGO3, during germline development. Required during oogenesis for pole cell formation in the pathway controlled by oskar (osk) and for abdominal segments during early embryogenesis. Involved in nanos (nos) and germ cell mRNAs localization. This is Protein arginine N-methyltransferase 5 from Drosophila melanogaster (Fruit fly).